Reading from the N-terminus, the 29-residue chain is Toxin Bcg III 15.67 (29 aa).

Residues 2-29 enclose the EGF-like domain; it reads QGTACTGEHAHSFCLNGGTCRHIQQLGE. A disulfide bridge connects residues Cys6 and Cys21.

The protein resides in the secreted. Its subcellular location is the nematocyst. Its function is as follows. Has both toxic and EGF activity. This chain is Toxin Bcg III 15.67, found in Bunodosoma cangicum (Sea anemone).